A 210-amino-acid polypeptide reads, in one-letter code: Heart- and neural crest derivatives-expressed protein 2 (210 aa).

The interval serine 81–glutamate 101 is disordered. The span at proline 90 to glutamate 101 shows a compositional bias: basic residues. In terms of domain architecture, bHLH spans lysine 92–leucine 144.

Efficient DNA binding requires dimerization with another bHLH protein. Heart, liver and spleen.

The protein localises to the nucleus. Essential for cardiac morphogenesis and for the development of branchial arches. Binds DNA on E-box consensus sequence 5'-CANNTG-3'. This chain is Heart- and neural crest derivatives-expressed protein 2 (hand2), found in Xenopus laevis (African clawed frog).